The primary structure comprises 179 residues: MFGYVVVNEQNSIVFLDGNEEFKTIFQSLIQSEITSRKSDLDSASSGVGSSTCTEEQESSLDHFKKPNVVFNSSEISHILLPLILLYRSTSEKTKDPITEMSSQFGTISISKFYHNYLVLVFANDDRKRIEVSQTIEHTIATLFGPLIAFCHTDLTTVKKPKEHLACALTRKLSYSPKC.

The disordered stretch occupies residues 40 to 59 (DLDSASSGVGSSTCTEEQES). Over residues 42–54 (DSASSGVGSSTCT) the composition is skewed to polar residues.

The polypeptide is Gut granule loss protein 3 (glo-3) (Caenorhabditis elegans).